The primary structure comprises 121 residues: Small ribosomal subunit protein bS21m (121 aa).

Residues 1-14 (MNSSYFPGVLGVRW) constitute a mitochondrion transit peptide.

Belongs to the bacterial ribosomal protein bS21 family. As to quaternary structure, component of the mitochondrial small ribosomal subunit (mt-SSU). Mature yeast 74S mitochondrial ribosomes consist of a small (37S) and a large (54S) subunit. The 37S small subunit contains a 15S ribosomal RNA (15S mt-rRNA) and at least 32 different proteins. The 54S large subunit contains a 21S rRNA (21S mt-rRNA) and at least 45 different proteins.

It is found in the mitochondrion. Its function is as follows. Component of the mitochondrial ribosome (mitoribosome), a dedicated translation machinery responsible for the synthesis of mitochondrial genome-encoded proteins, including at least some of the essential transmembrane subunits of the mitochondrial respiratory chain. The mitoribosomes are attached to the mitochondrial inner membrane and translation products are cotranslationally integrated into the membrane. The polypeptide is Small ribosomal subunit protein bS21m (mrp21) (Schizosaccharomyces pombe (strain 972 / ATCC 24843) (Fission yeast)).